The sequence spans 341 residues: UDP-N-acetylenolpyruvoylglucosamine reductase (341 aa).

Positions 15–185 (VEQSCLSLIE…TAVGLRLPKA (171 aa)) constitute an FAD-binding PCMH-type domain. The active site involves arginine 161. The active-site Proton donor is the serine 231. Residue glutamate 327 is part of the active site.

It belongs to the MurB family. It depends on FAD as a cofactor.

The protein resides in the cytoplasm. The enzyme catalyses UDP-N-acetyl-alpha-D-muramate + NADP(+) = UDP-N-acetyl-3-O-(1-carboxyvinyl)-alpha-D-glucosamine + NADPH + H(+). It functions in the pathway cell wall biogenesis; peptidoglycan biosynthesis. Its function is as follows. Cell wall formation. This is UDP-N-acetylenolpyruvoylglucosamine reductase from Shewanella sp. (strain ANA-3).